The chain runs to 147 residues: DNA base-flipping protein (147 aa).

The protein belongs to the MGMT family. ATL subfamily. As to quaternary structure, interacts with several proteins, including UvrA, UvrD and the three subunits of the RNA polymerase.

Involved in DNA damage recognition. Binds DNA containing O(6)-methylguanine and larger O(6)-alkylguanine adducts. Binds to the damaged base and flips the base out of the DNA duplex into an extrahelical conformation, which allows processing by repair proteins. Also affects the regulation of gene expression in response to alkylation. This is DNA base-flipping protein from Thermus thermophilus (strain ATCC 27634 / DSM 579 / HB8).